The following is a 176-amino-acid chain: Peptide deformylase (176 aa).

2 residues coordinate Fe cation: Cys94 and His136. The active site involves Glu137. Fe cation is bound at residue His140.

This sequence belongs to the polypeptide deformylase family. Fe(2+) serves as cofactor.

It catalyses the reaction N-terminal N-formyl-L-methionyl-[peptide] + H2O = N-terminal L-methionyl-[peptide] + formate. Its function is as follows. Removes the formyl group from the N-terminal Met of newly synthesized proteins. Requires at least a dipeptide for an efficient rate of reaction. N-terminal L-methionine is a prerequisite for activity but the enzyme has broad specificity at other positions. The chain is Peptide deformylase from Bartonella quintana (strain Toulouse) (Rochalimaea quintana).